A 254-amino-acid polypeptide reads, in one-letter code: Arginine transport ATP-binding protein ArgV (254 aa).

Positions 6 to 250 (IDAQQVCKNY…PKEQRTKDFL (245 aa)) constitute an ABC transporter domain. 38–45 (GPSGSGKS) contacts ATP.

The protein belongs to the ABC transporter superfamily. In terms of assembly, the complex is probably composed of two ATP-binding proteins (ArgV), two transmembrane proteins (ArgU) and a solute-binding protein (ArgT).

The protein localises to the cell membrane. It carries out the reaction a polar amino acid(out) + ATP + H2O = a polar amino acid(in) + ADP + phosphate + H(+). The enzyme catalyses L-arginine(out) + ATP + H2O = L-arginine(in) + ADP + phosphate + H(+). Part of the ABC transporter complex ArgTUV involved in L-arginine import. May also transport L-citrulline. Probably responsible for energy coupling to the transport system. This is Arginine transport ATP-binding protein ArgV from Corynebacterium glutamicum (strain ATCC 13032 / DSM 20300 / JCM 1318 / BCRC 11384 / CCUG 27702 / LMG 3730 / NBRC 12168 / NCIMB 10025 / NRRL B-2784 / 534).